A 157-amino-acid chain; its full sequence is Peptide methionine sulfoxide reductase MsrA (157 aa).

Cys13 is a catalytic residue.

It belongs to the MsrA Met sulfoxide reductase family.

The catalysed reaction is L-methionyl-[protein] + [thioredoxin]-disulfide + H2O = L-methionyl-(S)-S-oxide-[protein] + [thioredoxin]-dithiol. It catalyses the reaction [thioredoxin]-disulfide + L-methionine + H2O = L-methionine (S)-S-oxide + [thioredoxin]-dithiol. Has an important function as a repair enzyme for proteins that have been inactivated by oxidation. Catalyzes the reversible oxidation-reduction of methionine sulfoxide in proteins to methionine. The polypeptide is Peptide methionine sulfoxide reductase MsrA (Methanococcus maripaludis (strain C5 / ATCC BAA-1333)).